A 326-amino-acid polypeptide reads, in one-letter code: Vascular endothelial growth factor D (326 aa).

Residues 1–21 (MYGEWAAVNILMMSYVYLVQG) form the signal peptide. Positions 22–93 (FSIEHRAVKD…SRSTSHRSTR (72 aa)) are excised as a propeptide. 3 disulfide bridges follow: Cys-116–Cys-158, Cys-147–Cys-194, and Cys-151–Cys-196. Asn-160 and Asn-190 each carry an N-linked (GlcNAc...) asparagine glycan. The propeptide occupies 211–326 (SIQIPEEDQC…CRSMVFSLSP (116 aa)). A 1; approximate repeat occupies 227 to 242 (CPVDMLWDNTKCKCVL). The 4 X 16 AA repeats of C-X(10)-C-X-C-X(1,3)-C stretch occupies residues 227–317 (CPVDMLWDNT…KHKMFHPDTC (91 aa)). 2 consecutive repeat copies span residues 263–278 (CGPH…ECVC) and 282–298 (CPGD…CFEC). Asn-292 carries N-linked (GlcNAc...) asparagine glycosylation. One copy of the 4; truncated repeat lies at 306–317 (CQKHKMFHPDTC).

It belongs to the PDGF/VEGF growth factor family. Homodimer; non-covalent and antiparallel. In terms of processing, undergoes a complex proteolytic maturation which generates a variety of processed secreted forms with increased activity toward VEGFR-3 and VEGFR-2. VEGF-D first form an antiparallel homodimer linked by disulfide bonds before secretion. The fully processed VEGF-D is composed mostly of two VEGF homology domains (VHDs) bound by non-covalent interactions. Highly expressed in the spleen, kidney, lung, tongue, ovary and mammary gland.

It localises to the secreted. Growth factor active in angiogenesis, lymphangiogenesis and endothelial cell growth, stimulating their proliferation and migration and also has effects on the permeability of blood vessels. May function in the formation of the venous and lymphatic vascular systems during embryogenesis, and also in the maintenance of differentiated lymphatic endothelium in adults. Binds and activates VEGFR-3 (Flt4) receptor. This chain is Vascular endothelial growth factor D, found in Rattus norvegicus (Rat).